We begin with the raw amino-acid sequence, 102 residues long: Small ribosomal subunit protein uS10 (102 aa).

It belongs to the universal ribosomal protein uS10 family. In terms of assembly, part of the 30S ribosomal subunit.

Involved in the binding of tRNA to the ribosomes. The protein is Small ribosomal subunit protein uS10 of Caldanaerobacter subterraneus subsp. tengcongensis (strain DSM 15242 / JCM 11007 / NBRC 100824 / MB4) (Thermoanaerobacter tengcongensis).